The chain runs to 492 residues: Cytochrome P450 monooxygenase MYCFIDRAFT_204672 (492 aa).

Asparagine 116 carries N-linked (GlcNAc...) asparagine glycosylation. Residues 269-293 (FLISMIFISAANGCVVSGAMLYSIA) traverse the membrane as a helical segment. Asparagine 335 carries N-linked (GlcNAc...) asparagine glycosylation. Cysteine 430 is a heme binding site.

Belongs to the cytochrome P450 family. The cofactor is heme.

It is found in the membrane. Its pathway is secondary metabolite biosynthesis. In terms of biological role, cytochrome P450 monooxygenase; part of the gene cluster that mediates the biosynthesis of an emodin derivative that may be involved in black Sigatoka disease of banana. The pathway begins with the synthesis of atrochrysone thioester by the polyketide synthase PKS8-1. The atrochrysone carboxyl ACP thioesterase MYCFIDRAFT_190111 then breaks the thioester bond and releases the atrochrysone carboxylic acid from PKS8-1. The decarboxylase MYCFIDRAFT_34057 then catalyzes the concerted decarboxylation-elimination required to convert atochrysone carboxylic acid into emodin anthrone, which is further oxidized to emodin by the anthrone oxygenase MYCFIDRAFT_34418. The functions of the other tailoring enzymes as well as the final product of the cluster have still to be identified. The chain is Cytochrome P450 monooxygenase MYCFIDRAFT_204672 from Pseudocercospora fijiensis (strain CIRAD86) (Black leaf streak disease fungus).